Reading from the N-terminus, the 425-residue chain is MLDTKMLRANFQEIKAKLVHKGEDLTDFDKFEALDDRRRELIGKVEELKGKRNEVSQQVAVLKREKKDADHIIKEMREVGEEIKKLDEELRTVEAELDTILLSIPNIPHESVPVGETEDDNVEVRKWGEKPSFAYEPKPHWDIADELGILDFERAAKVTGSRFVFYKGLGARLERALYNFMLDLHVDEYNYTEVIPPYMVNRASMTGTGQLPKFEEDAFKIREEDYFLIPTAEVPITNMHRDEILSGDSLPINYAAFSACFRSEAGSAGRDTRGLIRQHQFNKVELVKFVKPEDSYEELEKLTNQAERVLQLLELPYRVMSMCTGDLGFTAAKKYDIEVWIPSQDTYREISSCSNFEAFQARRANIRFRREAKGKPEHVHTLNGSGLAVGRTVAAILENYQQEDGSVVIPKVLRPYMGNREVMKP.

Threonine 231–glutamate 233 lines the L-serine pocket. Residue arginine 262–glutamate 264 coordinates ATP. Glutamate 285 contacts L-serine. Glutamate 349–serine 352 lines the ATP pocket. Residue serine 385 coordinates L-serine.

It belongs to the class-II aminoacyl-tRNA synthetase family. Type-1 seryl-tRNA synthetase subfamily. In terms of assembly, homodimer. The tRNA molecule binds across the dimer.

It localises to the cytoplasm. It catalyses the reaction tRNA(Ser) + L-serine + ATP = L-seryl-tRNA(Ser) + AMP + diphosphate + H(+). It carries out the reaction tRNA(Sec) + L-serine + ATP = L-seryl-tRNA(Sec) + AMP + diphosphate + H(+). Its pathway is aminoacyl-tRNA biosynthesis; selenocysteinyl-tRNA(Sec) biosynthesis; L-seryl-tRNA(Sec) from L-serine and tRNA(Sec): step 1/1. Functionally, catalyzes the attachment of serine to tRNA(Ser). Is also able to aminoacylate tRNA(Sec) with serine, to form the misacylated tRNA L-seryl-tRNA(Sec), which will be further converted into selenocysteinyl-tRNA(Sec). The sequence is that of Serine--tRNA ligase from Bacillus subtilis (strain 168).